The primary structure comprises 388 residues: 8-amino-7-oxononanoate synthase (388 aa).

Arginine 23 is a binding site for substrate. 110–111 (GF) lines the pyridoxal 5'-phosphate pocket. Residue histidine 135 coordinates substrate. Positions 181, 209, and 235 each coordinate pyridoxal 5'-phosphate. At lysine 238 the chain carries N6-(pyridoxal phosphate)lysine. Substrate is bound at residue threonine 352.

This sequence belongs to the class-II pyridoxal-phosphate-dependent aminotransferase family. BioF subfamily. Homodimer. Requires pyridoxal 5'-phosphate as cofactor.

It carries out the reaction 6-carboxyhexanoyl-[ACP] + L-alanine + H(+) = (8S)-8-amino-7-oxononanoate + holo-[ACP] + CO2. Its pathway is cofactor biosynthesis; biotin biosynthesis. In terms of biological role, catalyzes the decarboxylative condensation of pimeloyl-[acyl-carrier protein] and L-alanine to produce 8-amino-7-oxononanoate (AON), [acyl-carrier protein], and carbon dioxide. The protein is 8-amino-7-oxononanoate synthase of Sodalis glossinidius (strain morsitans).